Here is a 224-residue protein sequence, read N- to C-terminus: UPF0502 protein Psyr_2419 (224 aa).

This sequence belongs to the UPF0502 family.

The sequence is that of UPF0502 protein Psyr_2419 from Pseudomonas syringae pv. syringae (strain B728a).